A 211-amino-acid polypeptide reads, in one-letter code: Ribosomal RNA small subunit methyltransferase G (211 aa).

S-adenosyl-L-methionine is bound by residues Gly73, 126-127 (IE), and Arg142.

This sequence belongs to the methyltransferase superfamily. RNA methyltransferase RsmG family.

Its subcellular location is the cytoplasm. It catalyses the reaction guanosine(527) in 16S rRNA + S-adenosyl-L-methionine = N(7)-methylguanosine(527) in 16S rRNA + S-adenosyl-L-homocysteine. Specifically methylates the N7 position of guanine in position 527 of 16S rRNA. In Methylorubrum extorquens (strain CM4 / NCIMB 13688) (Methylobacterium extorquens), this protein is Ribosomal RNA small subunit methyltransferase G.